Here is a 215-residue protein sequence, read N- to C-terminus: tRNA (guanine-N(7)-)-methyltransferase (215 aa).

Residues D43, E68, N95, and D121 each coordinate S-adenosyl-L-methionine. D121 is an active-site residue. 2 residues coordinate substrate: K125 and D157.

Belongs to the class I-like SAM-binding methyltransferase superfamily. TrmB family.

The catalysed reaction is guanosine(46) in tRNA + S-adenosyl-L-methionine = N(7)-methylguanosine(46) in tRNA + S-adenosyl-L-homocysteine. Its pathway is tRNA modification; N(7)-methylguanine-tRNA biosynthesis. Its function is as follows. Catalyzes the formation of N(7)-methylguanine at position 46 (m7G46) in tRNA. The polypeptide is tRNA (guanine-N(7)-)-methyltransferase (Trichormus variabilis (strain ATCC 29413 / PCC 7937) (Anabaena variabilis)).